Reading from the N-terminus, the 458-residue chain is Biphenyl dioxygenase subunit alpha (458 aa).

The Rieske domain occupies 58-156; sequence WLLLGHESHV…KEGDCGFDKA (99 aa). Cysteine 100, histidine 102, cysteine 120, and histidine 123 together coordinate [2Fe-2S] cluster. Residues histidine 233 and histidine 239 each contribute to the Fe cation site.

The protein belongs to the bacterial ring-hydroxylating dioxygenase alpha subunit family. Heterohexamer consisting of three BphA subunits and three BphE subunits. A ferredoxin (BphF) and a ferredoxin reductase (BphG) must be present to obtain activity. [2Fe-2S] cluster is required as a cofactor. Requires Fe cation as cofactor.

It catalyses the reaction biphenyl + NADH + O2 + H(+) = (2R,3S)-3-phenylcyclohexa-3,5-diene-1,2-diol + NAD(+). The protein operates within xenobiotic degradation; biphenyl degradation; 2-hydroxy-2,4-pentadienoate and benzoate from biphenyl: step 1/4. In Metapseudomonas furukawaii (Pseudomonas furukawaii), this protein is Biphenyl dioxygenase subunit alpha (bphA).